Here is a 645-residue protein sequence, read N- to C-terminus: uncharacterized protein (645 aa).

Residues 1–23 (MPSSHRLSATILIFLSLTYISSS) form the signal peptide. Disordered regions lie at residues 30–58 (ITDKQDSSEDDDHLQTFPTPPPIGTTTAS) and 92–129 (NSNANPYFSTTRKPKNRSDSSQKARDPDPQNQVIAGIP). The segment covering 92-102 (NSNANPYFSTT) has biased composition (polar residues). An N-linked (GlcNAc...) asparagine glycan is attached at Asn-107. Positions 107–119 (NRSDSSQKARDPD) are enriched in basic and acidic residues. Positions 135–214 (CFRRYENSII…QTRDYFEPTD (80 aa)) constitute a PAN 1 domain. Intrachain disulfides connect Cys-161–Cys-187 and Cys-165–Cys-175. The segment at 225 to 247 (ESSSSAPSSEDEDSPPSPPPSAP) is disordered. PAN domains are found at residues 281–369 (CPRG…EKIC) and 378–465 (CPST…EVEC). 6 disulfides stabilise this stretch: Cys-281–Cys-369, Cys-313–Cys-341, Cys-317–Cys-329, Cys-378–Cys-465, Cys-407–Cys-436, and Cys-411–Cys-422. An N-linked (GlcNAc...) asparagine glycan is attached at Asn-421. Basic and acidic residues predominate over residues 556 to 567 (AGELENNDHEQI). Residues 556-582 (AGELENNDHEQIEDNNTDASEDPVPTK) form a disordered region. An N-linked (GlcNAc...) asparagine glycan is attached at Asn-570.

This is an uncharacterized protein from Caenorhabditis elegans.